Here is a 710-residue protein sequence, read N- to C-terminus: Polyribonucleotide nucleotidyltransferase (710 aa).

Positions 486 and 492 each coordinate Mg(2+). Positions 553–612 (PRFETIKIHPDKIRDIIGKGGATIRSITEETNSSIDIDDDGTVKVYADDNEALQAALNRI) constitute a KH domain. The region spanning 622 to 690 (GAIYEGTVVR…QRGRIKLSIK (69 aa)) is the S1 motif domain.

It belongs to the polyribonucleotide nucleotidyltransferase family. As to quaternary structure, component of the RNA degradosome, which is a multiprotein complex involved in RNA processing and mRNA degradation. Mg(2+) serves as cofactor.

It is found in the cytoplasm. It catalyses the reaction RNA(n+1) + phosphate = RNA(n) + a ribonucleoside 5'-diphosphate. Involved in mRNA degradation. Catalyzes the phosphorolysis of single-stranded polyribonucleotides processively in the 3'- to 5'-direction. This is Polyribonucleotide nucleotidyltransferase from Cellvibrio japonicus (strain Ueda107) (Pseudomonas fluorescens subsp. cellulosa).